A 694-amino-acid polypeptide reads, in one-letter code: Scarecrow-like protein 33 (694 aa).

The disordered stretch occupies residues 289-313; the sequence is PAKASTFSKSPKGEKPEASGNSYTK. Positions 309-692 constitute a GRAS domain; the sequence is NSYTKETPDL…RIVYGSSIWV (384 aa). The tract at residues 316 to 376 is leucine repeat I (LRI); sequence PDLRTMLVSC…EARLAGIGTQ (61 aa). The segment at 395–462 is VHIID; the sequence is YQTYISVCPF…GSSCKLRITG (68 aa). The short motif at 428–432 is the VHIID element; sequence IHIID. The interval 478-510 is leucine repeat II (LRII); that stretch reads ETGRRLAKYCQKFNIPFEYNAIAQKWESIKLED. Positions 519 to 613 are PFYRE; sequence VAVNSLFRFR…KEFYGREIMN (95 aa). The tract at residues 616-692 is SAW; that stretch reads ACEGTERVER…RIVYGSSIWV (77 aa).

It belongs to the GRAS family. Interacts with SNRNP35.

The protein localises to the nucleus. Probable transcription factor involved in plant development. The protein is Scarecrow-like protein 33 (SCL33) of Arabidopsis thaliana (Mouse-ear cress).